The chain runs to 168 residues: Probable deoxyuridine 5'-triphosphate nucleotidohydrolase (168 aa).

This sequence belongs to the dCTP deaminase family. Archaeal dUTPase subfamily.

It carries out the reaction dUTP + H2O = dUMP + diphosphate + H(+). It participates in pyrimidine metabolism; dUMP biosynthesis; dUMP from dCTP (dUTP route): step 2/2. In terms of biological role, this enzyme is involved in nucleotide metabolism: it produces dUMP, the immediate precursor of thymidine nucleotides and it decreases the intracellular concentration of dUTP so that uracil cannot be incorporated into DNA. The protein is Probable deoxyuridine 5'-triphosphate nucleotidohydrolase of Archaeoglobus fulgidus (strain ATCC 49558 / DSM 4304 / JCM 9628 / NBRC 100126 / VC-16).